A 357-amino-acid chain; its full sequence is THUMP domain-containing protein 1 (357 aa).

The span at 1–10 (MAARIQQSPQ) shows a compositional bias: polar residues. 2 disordered regions span residues 1–38 (MAAR…GPRQ) and 74–95 (GPEK…DDDV). The residue at position 2 (Ala-2) is an N-acetylalanine. A phosphoserine mark is found at Ser-8, Ser-86, Ser-88, and Ser-119. Positions 147-254 (DIYKTKKKKT…KAVCCLSVVK (108 aa)) constitute a THUMP domain. Ser-270 is modified (phosphoserine). Composition is skewed to polar residues over residues 276–287 (QLNPKQAAQTGN) and 298–315 (KSSQ…QVVP). Residues 276 to 357 (QLNPKQAAQT…EGSESNENDL (82 aa)) are disordered.

The protein belongs to the THUMPD1 family. As to quaternary structure, interacts with NAT10. Binds tRNA.

Functions as a tRNA-binding adapter to mediate NAT10-dependent tRNA acetylation modifying cytidine to N4-acetylcytidine (ac4C). The sequence is that of THUMP domain-containing protein 1 (THUMPD1) from Bos taurus (Bovine).